Here is a 613-residue protein sequence, read N- to C-terminus: Lysophospholipase 1 (613 aa).

Positions 1-21 are cleaved as a signal peptide; it reads MLFRGLSLWMLFLASCLSALA. The PLA2c domain maps to 55 to 593; the sequence is DCPSDNIVES…YNYCWSGLYD (539 aa). N-linked (GlcNAc...) asparagine glycans are attached at residues asparagine 142, asparagine 173, asparagine 220, asparagine 244, asparagine 281, asparagine 319, asparagine 348, asparagine 365, asparagine 494, asparagine 499, asparagine 523, asparagine 551, and asparagine 572.

Belongs to the lysophospholipase family.

It localises to the secreted. The enzyme catalyses a 1-acyl-sn-glycero-3-phosphocholine + H2O = sn-glycerol 3-phosphocholine + a fatty acid + H(+). Its function is as follows. Catalyzes the release of fatty acids from lysophospholipids. Required for survival under high osmolarity, for normal osmotic stress-induced gene expression, and for nutrient-mediated repression of sexual differentiation. In Schizosaccharomyces pombe (strain 972 / ATCC 24843) (Fission yeast), this protein is Lysophospholipase 1 (plb1).